Here is a 220-residue protein sequence, read N- to C-terminus: Probable GTP-binding protein EngB (220 aa).

The region spanning A31–P205 is the EngB-type G domain. GTP contacts are provided by residues G39–S46, G66–L70, D84–G87, T151–D154, and F184–S186. Mg(2+)-binding residues include S46 and T68.

Belongs to the TRAFAC class TrmE-Era-EngA-EngB-Septin-like GTPase superfamily. EngB GTPase family. The cofactor is Mg(2+).

Necessary for normal cell division and for the maintenance of normal septation. This Shewanella sediminis (strain HAW-EB3) protein is Probable GTP-binding protein EngB.